Here is a 358-residue protein sequence, read N- to C-terminus: UDP-N-acetylglucosamine--N-acetylmuramyl-(pentapeptide) pyrophosphoryl-undecaprenol N-acetylglucosamine transferase (358 aa).

UDP-N-acetyl-alpha-D-glucosamine-binding positions include 11-13 (TGG), Asn122, Arg161, Ser189, Ile243, 262-267 (ALTVCE), and Gln288.

The protein belongs to the glycosyltransferase 28 family. MurG subfamily.

The protein resides in the cell inner membrane. It catalyses the reaction di-trans,octa-cis-undecaprenyl diphospho-N-acetyl-alpha-D-muramoyl-L-alanyl-D-glutamyl-meso-2,6-diaminopimeloyl-D-alanyl-D-alanine + UDP-N-acetyl-alpha-D-glucosamine = di-trans,octa-cis-undecaprenyl diphospho-[N-acetyl-alpha-D-glucosaminyl-(1-&gt;4)]-N-acetyl-alpha-D-muramoyl-L-alanyl-D-glutamyl-meso-2,6-diaminopimeloyl-D-alanyl-D-alanine + UDP + H(+). It participates in cell wall biogenesis; peptidoglycan biosynthesis. In terms of biological role, cell wall formation. Catalyzes the transfer of a GlcNAc subunit on undecaprenyl-pyrophosphoryl-MurNAc-pentapeptide (lipid intermediate I) to form undecaprenyl-pyrophosphoryl-MurNAc-(pentapeptide)GlcNAc (lipid intermediate II). This chain is UDP-N-acetylglucosamine--N-acetylmuramyl-(pentapeptide) pyrophosphoryl-undecaprenol N-acetylglucosamine transferase, found in Coxiella burnetii (strain Dugway 5J108-111).